The chain runs to 340 residues: Cytosolic Fe-S cluster assembly factor NBP35 (340 aa).

4 residues coordinate [4Fe-4S] cluster: C31, C45, C48, and C54. An ATP-binding site is contributed by 84 to 91; the sequence is GKGGVGKS. 2 residues coordinate [4Fe-4S] cluster: C257 and C260.

The protein belongs to the Mrp/NBP35 ATP-binding proteins family. NUBP1/NBP35 subfamily. Heterotetramer of 2 NBP35 and 2 CFD1 chains. [4Fe-4S] cluster serves as cofactor.

It localises to the cytoplasm. Component of the cytosolic iron-sulfur (Fe/S) protein assembly (CIA) machinery. Required for maturation of extramitochondrial Fe-S proteins. The NBP35-CFD1 heterotetramer forms a Fe-S scaffold complex, mediating the de novo assembly of an Fe-S cluster and its transfer to target apoproteins. This Phaeosphaeria nodorum (strain SN15 / ATCC MYA-4574 / FGSC 10173) (Glume blotch fungus) protein is Cytosolic Fe-S cluster assembly factor NBP35.